The chain runs to 340 residues: Anthranilate phosphoribosyltransferase (340 aa).

5-phospho-alpha-D-ribose 1-diphosphate is bound by residues Gly-83, Gly-86–Asp-87, Thr-91, Asn-93–Thr-96, Lys-111–Ser-119, and Ser-123. Gly-83 is an anthranilate binding site. Ser-95 serves as a coordination point for Mg(2+). An anthranilate-binding site is contributed by Asn-114. An anthranilate-binding site is contributed by Arg-169. The Mg(2+) site is built by Asp-228 and Glu-229.

It belongs to the anthranilate phosphoribosyltransferase family. As to quaternary structure, homodimer. Mg(2+) is required as a cofactor.

It carries out the reaction N-(5-phospho-beta-D-ribosyl)anthranilate + diphosphate = 5-phospho-alpha-D-ribose 1-diphosphate + anthranilate. It participates in amino-acid biosynthesis; L-tryptophan biosynthesis; L-tryptophan from chorismate: step 2/5. In terms of biological role, catalyzes the transfer of the phosphoribosyl group of 5-phosphorylribose-1-pyrophosphate (PRPP) to anthranilate to yield N-(5'-phosphoribosyl)-anthranilate (PRA). This is Anthranilate phosphoribosyltransferase from Solibacter usitatus (strain Ellin6076).